The following is a 220-amino-acid chain: Endonuclease NucS (220 aa).

It belongs to the NucS endonuclease family.

Its subcellular location is the cytoplasm. Its function is as follows. Cleaves both 3' and 5' ssDNA extremities of branched DNA structures. This Frankia alni (strain DSM 45986 / CECT 9034 / ACN14a) protein is Endonuclease NucS.